The following is a 324-amino-acid chain: Olfactory receptor 7G2 (324 aa).

Topologically, residues 1–25 are extracellular; it reads MEARNQTAISKFLLLGLIEDPELQP. Residue asparagine 5 is glycosylated (N-linked (GlcNAc...) asparagine). The helical transmembrane segment at 26–46 threads the bilayer; that stretch reads VLFSLFLSMYLVTILGNLLIL. Residues 47–54 are Cytoplasmic-facing; sequence LAVISDSH. A helical transmembrane segment spans residues 55-75; the sequence is LHTPMYFFLSNLSFLDICLST. The Extracellular segment spans residues 76–99; the sequence is TTIPKMLVNIQAQNRSITYSGCLT. A glycan (N-linked (GlcNAc...) asparagine) is linked at asparagine 89. Cysteine 97 and cysteine 189 are joined by a disulfide. Residues 100–120 form a helical membrane-spanning segment; that stretch reads QICFVLFFAGLENCLLAAMAY. Topologically, residues 121-139 are cytoplasmic; it reads DRYVAICHPLRYTVIMNPR. Residues 140–160 traverse the membrane as a helical segment; sequence LCGLLILLSLLTSVVNALLLS. Over 161-197 the chain is Extracellular; it reads LMVLRLSFCTDLEIPLFFCELAQVIQLTCSDTLINNI. The chain crosses the membrane as a helical span at residues 198 to 217; the sequence is LIYFAACIFGGVPLSGIILS. Over 218 to 237 the chain is Cytoplasmic; sequence YTQITSCVLRMPSASGKHKA. A helical membrane pass occupies residues 238–258; that stretch reads VSTCGSHLSIVLLFYGAGLGV. At 259–271 the chain is on the extracellular side; it reads YISSVVTDSPRKT. The helical transmembrane segment at 272–292 threads the bilayer; that stretch reads AVASVMYSVFPQMVNPFIYSL. The Cytoplasmic portion of the chain corresponds to 293-324; the sequence is RNKDMKGTLRKFIGRIPSLLWCAICFGFRFLE.

Belongs to the G-protein coupled receptor 1 family.

Its subcellular location is the cell membrane. Odorant receptor. This Homo sapiens (Human) protein is Olfactory receptor 7G2 (OR7G2).